The following is a 35-amino-acid chain: Photosystem II reaction center protein T (35 aa).

The helical transmembrane segment at alanine 3–phenylalanine 23 threads the bilayer.

It belongs to the PsbT family. As to quaternary structure, PSII is composed of 1 copy each of membrane proteins PsbA, PsbB, PsbC, PsbD, PsbE, PsbF, PsbH, PsbI, PsbJ, PsbK, PsbL, PsbM, PsbT, PsbY, PsbZ, Psb30/Ycf12, at least 3 peripheral proteins of the oxygen-evolving complex and a large number of cofactors. It forms dimeric complexes.

It localises to the plastid. It is found in the chloroplast thylakoid membrane. Functionally, found at the monomer-monomer interface of the photosystem II (PS II) dimer, plays a role in assembly and dimerization of PSII. PSII is a light-driven water plastoquinone oxidoreductase, using light energy to abstract electrons from H(2)O, generating a proton gradient subsequently used for ATP formation. This Cabomba caroliniana (Carolina fanwort) protein is Photosystem II reaction center protein T.